A 254-amino-acid chain; its full sequence is 5-oxoprolinase subunit A (254 aa).

Belongs to the LamB/PxpA family. In terms of assembly, forms a complex composed of PxpA, PxpB and PxpC.

The catalysed reaction is 5-oxo-L-proline + ATP + 2 H2O = L-glutamate + ADP + phosphate + H(+). Functionally, catalyzes the cleavage of 5-oxoproline to form L-glutamate coupled to the hydrolysis of ATP to ADP and inorganic phosphate. The chain is 5-oxoprolinase subunit A from Acinetobacter baumannii (strain ACICU).